Consider the following 200-residue polypeptide: Cytochrome c biogenesis ATP-binding export protein CcmA (200 aa).

An ABC transporter domain is found at leucine 3–alanine 200. Glycine 35–threonine 42 serves as a coordination point for ATP.

This sequence belongs to the ABC transporter superfamily. CcmA exporter (TC 3.A.1.107) family. In terms of assembly, the complex is composed of two ATP-binding proteins (CcmA) and two transmembrane proteins (CcmB).

It is found in the cell inner membrane. It catalyses the reaction heme b(in) + ATP + H2O = heme b(out) + ADP + phosphate + H(+). Its function is as follows. Part of the ABC transporter complex CcmAB involved in the biogenesis of c-type cytochromes; once thought to export heme, this seems not to be the case, but its exact role is uncertain. Responsible for energy coupling to the transport system. The protein is Cytochrome c biogenesis ATP-binding export protein CcmA of Rhodopseudomonas palustris (strain BisB5).